The following is a 338-amino-acid chain: Replication factor C small subunit (338 aa).

53 to 60 (GPPGVGKT) contributes to the ATP binding site.

Belongs to the activator 1 small subunits family. RfcS subfamily. As to quaternary structure, heteromultimer composed of small subunits (RfcS) and large subunits (RfcL).

In terms of biological role, part of the RFC clamp loader complex which loads the PCNA sliding clamp onto DNA. The polypeptide is Replication factor C small subunit (Methanosarcina acetivorans (strain ATCC 35395 / DSM 2834 / JCM 12185 / C2A)).